A 1252-amino-acid polypeptide reads, in one-letter code: Fanconi anemia group J protein homolog (1252 aa).

A Helicase ATP-binding domain is found at 11–452 (GGVKIMFPCK…KDHEQLRAMC (442 aa)). The short motif at 164–181 (RKRIRPLETEQQVRKRHC) is the Nuclear localization signal element. 191-198 (ALEVYNQR) is a binding site for ATP. The [4Fe-4S] cluster site is built by Cys-292, Cys-308, Cys-320, and Cys-360. The short motif at 403–406 (DEAH) is the DEAH box element. Disordered regions lie at residues 919 to 1008 (SKEP…DRTN) and 1212 to 1252 (TNGE…STST). Polar residues-rich tracts occupy residues 920 to 930 (KEPSSASQQEA) and 952 to 969 (HLTTTINSINPGPSNQPG). Positions 989–1008 (MDSTPRRPANKTEKKSDRTN) are enriched in basic and acidic residues. Residues 1215-1224 (EEAEQVESQE) are compositionally biased toward acidic residues. Basic residues predominate over residues 1228 to 1239 (KKRKISLSRSRN).

This sequence belongs to the DEAD box helicase family. DEAH subfamily. [4Fe-4S] cluster serves as cofactor.

Its subcellular location is the nucleus. It carries out the reaction Couples ATP hydrolysis with the unwinding of duplex DNA at the replication fork by translocating in the 5'-3' direction. This creates two antiparallel DNA single strands (ssDNA). The leading ssDNA polymer is the template for DNA polymerase III holoenzyme which synthesizes a continuous strand.. The enzyme catalyses ATP + H2O = ADP + phosphate + H(+). DNA-dependent helicase and 5' to 3' DNA helicase required for the maintenance of chromosomal stability. Involved in the repair of DNA double-strand breaks by homologous recombination. Involved in the repair of abasic sites at replication forks by promoting the degradation of DNA-protein cross-links: acts by catalyzing unfolding of HMCES DNA-protein cross-link via its helicase activity, exposing the underlying DNA and enabling cleavage of the DNA-protein adduct by the SPRTN metalloprotease. The chain is Fanconi anemia group J protein homolog (BRIP1) from Gallus gallus (Chicken).